We begin with the raw amino-acid sequence, 198 residues long: MSFSPQLVNLGNYLAGEFDNREQALGEPIWFVHLRLWQRPVDLFSDDSITLFAEQANIVNLDRPYRQRILRLMPAPDSETGLYVQYYMPKNPSALIGAGRHPDLLKTLTPQQLELLPGCVLSVSQQTVAPNSYQFTASPLPNTCCTFSYLENTVQVSLGFAVTETELHTYDKGIDQETGKATWGAIVGPYRYTKREQY.

It belongs to the CpcT/CpeT biliprotein lyase family.

In terms of biological role, covalently attaches a chromophore to Cys residue(s) of phycobiliproteins. In vitro is not seen to act as a chromophore lyase for ApcA1, ApcA2, ApcB, ApcD, ApcF, CpcB or PecB, the lyase activity is therefore unsure. This chain is Phycocyanobilin lyase CpcT homolog (cpcT2), found in Nostoc sp. (strain PCC 7120 / SAG 25.82 / UTEX 2576).